Here is a 355-residue protein sequence, read N- to C-terminus: Capsid protein VP1/VP2 (355 aa).

A compositionally biased stretch (basic and acidic residues) spans 1–21 (MADSTTMEHDGRGTKRKREAD). Positions 1–41 (MADSTTMEHDGRGTKRKREADGGSGQGVGKGNSNAVKEGYG) are disordered.

This sequence belongs to the parvoviridae capsid protein family.

The protein resides in the virion. Its function is as follows. Capsid protein self-assembles to form an icosahedral capsid with a T=1 symmetry, about 22 nm in diameter, and consisting of 60 copies of size variants of the capsid proteins, which differ in the N-terminushe capsid encapsulates the genomic ssDNA. Capsid proteins are responsible for the attachment to host cell receptors. This attachment induces virion internalization predominantly through clathrin-dependent endocytosis. The chain is Capsid protein VP1/VP2 (VP) from Aedes albopictus densovirus (isolate Boublik/1994) (AalDNV).